The following is a 745-amino-acid chain: Polyribonucleotide nucleotidyltransferase (745 aa).

Mg(2+) contacts are provided by D487 and D493. One can recognise a KH domain in the interval P554 to I613. Residues G623–K691 form the S1 motif domain. The disordered stretch occupies residues Q695–E745. The segment covering I701–E745 has biased composition (basic and acidic residues).

This sequence belongs to the polyribonucleotide nucleotidyltransferase family. Mg(2+) is required as a cofactor.

The protein resides in the cytoplasm. It carries out the reaction RNA(n+1) + phosphate = RNA(n) + a ribonucleoside 5'-diphosphate. Functionally, involved in mRNA degradation. Catalyzes the phosphorolysis of single-stranded polyribonucleotides processively in the 3'- to 5'-direction. This Methylorubrum populi (strain ATCC BAA-705 / NCIMB 13946 / BJ001) (Methylobacterium populi) protein is Polyribonucleotide nucleotidyltransferase.